A 299-amino-acid chain; its full sequence is tRNA dimethylallyltransferase (299 aa).

ATP is bound at residue 10 to 17 (GPTAVGKT). Residue 12 to 17 (TAVGKT) participates in substrate binding. An interaction with substrate tRNA region spans residues 35–38 (DSQQ).

This sequence belongs to the IPP transferase family. As to quaternary structure, monomer. Mg(2+) is required as a cofactor.

It catalyses the reaction adenosine(37) in tRNA + dimethylallyl diphosphate = N(6)-dimethylallyladenosine(37) in tRNA + diphosphate. Its function is as follows. Catalyzes the transfer of a dimethylallyl group onto the adenine at position 37 in tRNAs that read codons beginning with uridine, leading to the formation of N6-(dimethylallyl)adenosine (i(6)A). The chain is tRNA dimethylallyltransferase from Streptococcus thermophilus (strain CNRZ 1066).